The following is an 878-amino-acid chain: Indoleacetate decarboxylase (878 aa).

The region spanning 42-750 is the PFL domain; it reads DRTKRMKERF…VTGATPDGRL (709 aa). Residue cysteine 500 is the Cysteine radical intermediate of the active site. Glutamate 502 acts as the Proton acceptor in catalysis. In terms of domain architecture, Glycine radical spans 758–878; sequence GILSASPGTD…VIARTEYDAL (121 aa). Glycine 853 carries the post-translational modification Glycine radical.

Belongs to the glycyl radical enzyme (GRE) family. As to quaternary structure, homodimer (predominantly) and monomer. Requires the activating protein OsIADAE to generate the key active site glycyl radical on Gly-853 that is involved in catalysis.

It carries out the reaction (indol-3-yl)acetate + H(+) = skatole + CO2. The protein operates within amino-acid degradation. Glycyl radical enzyme that catalyzes the terminal step of tryptophan fermentation, the decarboxylation of indoleacetate to form skatole, a malodorous compound that contributes to the characteristic smell of animal feces. No activity is detected with phenylacetate or p-hydroxyphenylacetate as substrates, indicating high substrate specificity. This chain is Indoleacetate decarboxylase, found in Tractidigestivibacter scatoligenes (Olsenella scatoligenes).